An 81-amino-acid polypeptide reads, in one-letter code: Extracellular matrix regulatory protein B (81 aa).

Its function is as follows. Regulates the biosynthesis of the extracellular matrix and the biofilm formation. May act as an enhancer of biofilm gene expression. Acts in parallel to the pathway that governs SinR derepression. This is Extracellular matrix regulatory protein B from Bacillus subtilis (strain 168).